The chain runs to 155 residues: Endoribonuclease YbeY (155 aa).

Zn(2+) contacts are provided by histidine 114, histidine 118, and histidine 124.

Belongs to the endoribonuclease YbeY family. Zn(2+) serves as cofactor.

The protein localises to the cytoplasm. Functionally, single strand-specific metallo-endoribonuclease involved in late-stage 70S ribosome quality control and in maturation of the 3' terminus of the 16S rRNA. The sequence is that of Endoribonuclease YbeY from Escherichia coli O6:K15:H31 (strain 536 / UPEC).